Consider the following 89-residue polypeptide: Co-chaperonin GroES (89 aa).

Belongs to the GroES chaperonin family. As to quaternary structure, heptamer of 7 subunits arranged in a ring. Interacts with the chaperonin GroEL.

It localises to the cytoplasm. Functionally, together with the chaperonin GroEL, plays an essential role in assisting protein folding. The GroEL-GroES system forms a nano-cage that allows encapsulation of the non-native substrate proteins and provides a physical environment optimized to promote and accelerate protein folding. GroES binds to the apical surface of the GroEL ring, thereby capping the opening of the GroEL channel. This Fervidobacterium nodosum (strain ATCC 35602 / DSM 5306 / Rt17-B1) protein is Co-chaperonin GroES.